Consider the following 175-residue polypeptide: Large ribosomal subunit protein uL16 (175 aa).

Belongs to the universal ribosomal protein uL16 family.

The sequence is that of Large ribosomal subunit protein uL16 from Metallosphaera sedula (strain ATCC 51363 / DSM 5348 / JCM 9185 / NBRC 15509 / TH2).